We begin with the raw amino-acid sequence, 188 residues long: Small ribosomal subunit protein eS8 (188 aa).

The interval 1–34 is disordered; that stretch reads MGISRDSRHKRRLTGGRYPVHKKKRKYELGRPSS. Basic residues predominate over residues 7–26; that stretch reads SRHKRRLTGGRYPVHKKKRK.

Belongs to the eukaryotic ribosomal protein eS8 family.

This Theileria parva (East coast fever infection agent) protein is Small ribosomal subunit protein eS8 (RPS8).